A 175-amino-acid polypeptide reads, in one-letter code: S-fimbrial protein subunit SfaG (175 aa).

The first 27 residues, 1-27 (MVKDIIKTVTFSCMLAGSMFVTCHVCA), serve as a signal peptide directing secretion. Cysteine 43 and cysteine 83 are disulfide-bonded.

Belongs to the fimbrial protein family.

The protein localises to the fimbrium. Functionally, fimbriae (also called pili), polar filaments radiating from the surface of the bacterium to a length of 0.5-1.5 micrometers and numbering 100-300 per cell, enable bacteria to colonize the epithelium of specific host organs. A minor fimbrial subunit. This protein is necessary for full expression of S-specific binding. S-fimbrial adhesins enable pathogenic E.coli causing urinary-tract infections or newborn meningitis to attach to glycoproteins terminating with alpha-sialic acid-(2-3)-beta-Gal. The polypeptide is S-fimbrial protein subunit SfaG (sfaG) (Escherichia coli O6:K15:H31 (strain 536 / UPEC)).